The following is a 575-amino-acid chain: Delta-selinene-like synthase, chloroplastic (575 aa).

Residues Arg-288, Asp-325, Asp-329, Arg-466, and Asp-469 each contribute to the (2E,6E)-farnesyl diphosphate site. Mg(2+) is bound by residues Asp-325 and Asp-329. The DDXXD motif motif lies at Asp-325–Asp-329. Positions 469 and 477 each coordinate Mg(2+).

It belongs to the terpene synthase family. Tpsb subfamily. Monomer. Mg(2+) serves as cofactor. The cofactor is Mn(2+).

The protein resides in the plastid. It is found in the chloroplast. The catalysed reaction is (2E,6E)-farnesyl diphosphate = (+)-delta-selinene + diphosphate. Its pathway is secondary metabolite biosynthesis; terpenoid biosynthesis. It participates in terpene metabolism; oleoresin biosynthesis. In terms of biological role, sesquiterpene synthase (sesqui-TPS) involved in the biosynthesis of sesquiterpene natural products. Catalyzes the conversion of (2E)-geranyl diphosphate (GPP) into delta-selinene. This Picea sitchensis (Sitka spruce) protein is Delta-selinene-like synthase, chloroplastic.